A 303-amino-acid chain; its full sequence is Uricase (303 aa).

Alanine 2 is modified (N-acetylalanine). An N6-acetyllysine; alternate mark is found at lysine 10 and lysine 23. 2 positions are modified to N6-succinyllysine; alternate: lysine 10 and lysine 23. Lysine 23 serves as the catalytic Charge relay system. N6-acetyllysine occurs at positions 27 and 36. Residues serine 39 and serine 63 each carry the phosphoserine modification. Threonine 68 functions as the Charge relay system in the catalytic mechanism. Residues threonine 68 and aspartate 69 each contribute to the urate site. N6-acetyllysine occurs at positions 118, 122, and 164. Phenylalanine 170 is a binding site for urate. N6-acetyllysine occurs at positions 175 and 185. Arginine 187 provides a ligand contact to urate. At lysine 220 the chain carries N6-acetyllysine; alternate. The residue at position 220 (lysine 220) is an N6-succinyllysine; alternate. Serine 231 carries the post-translational modification Phosphoserine. Urate contacts are provided by valine 234, glutamine 235, and asparagine 261. Residue histidine 263 is the Charge relay system of the active site. At lysine 277 the chain carries N6-acetyllysine. Residue tyrosine 288 is modified to Phosphotyrosine. A Microbody targeting signal motif is present at residues 301 to 303; the sequence is SRL.

This sequence belongs to the uricase family. As to expression, expressed in liver. Not detected in other tissues tested.

The protein resides in the peroxisome. The catalysed reaction is urate + O2 + H2O = 5-hydroxyisourate + H2O2. It participates in purine metabolism; urate degradation; (S)-allantoin from urate: step 1/3. With respect to regulation, competitively inhibited by xanthine. Functionally, catalyzes the oxidation of uric acid to 5-hydroxyisourate, which is further processed to form (S)-allantoin. The chain is Uricase (Uox) from Rattus norvegicus (Rat).